Here is a 363-residue protein sequence, read N- to C-terminus: Protein-glutamate methylesterase/protein-glutamine glutaminase of group 3 operon (363 aa).

In terms of domain architecture, Response regulatory spans 7 to 124 (RVLIVDDSAS…RQALMESSGR (118 aa)). Aspartate 58 carries the post-translational modification 4-aspartylphosphate. The CheB-type methylesterase domain occupies 166–357 (PTTERIVCIG…REIMAWQQAK (192 aa)). Residues serine 177, histidine 203, and aspartate 299 contribute to the active site.

The protein belongs to the CheB family. Phosphorylated by CheA. Phosphorylation of the N-terminal regulatory domain activates the methylesterase activity.

It is found in the cytoplasm. The catalysed reaction is [protein]-L-glutamate 5-O-methyl ester + H2O = L-glutamyl-[protein] + methanol + H(+). It catalyses the reaction L-glutaminyl-[protein] + H2O = L-glutamyl-[protein] + NH4(+). In terms of biological role, involved in chemotaxis. Part of a chemotaxis signal transduction system that modulates chemotaxis in response to various stimuli. Catalyzes the demethylation of specific methylglutamate residues introduced into the chemoreceptors (methyl-accepting chemotaxis proteins or MCP) by CheR. Also mediates the irreversible deamidation of specific glutamine residues to glutamic acid. The chain is Protein-glutamate methylesterase/protein-glutamine glutaminase of group 3 operon from Rhodopseudomonas palustris (strain ATCC BAA-98 / CGA009).